The sequence spans 143 residues: Large ribosomal subunit protein uL15 (143 aa).

2 stretches are compositionally biased toward basic residues: residues 1-13 (MIRK…KQRG) and 23-38 (KKHR…GNAG). The tract at residues 1–38 (MIRKSKKITKQRGSRTCGYGEAKKHRGAGHRGGRGNAG) is disordered.

This sequence belongs to the universal ribosomal protein uL15 family. As to quaternary structure, part of the 50S ribosomal subunit.

Its function is as follows. Binds to the 23S rRNA. This Methanococcus vannielii protein is Large ribosomal subunit protein uL15.